Here is a 138-residue protein sequence, read N- to C-terminus: Large ribosomal subunit protein uL16 (138 aa).

Over residues 1–13 (MLQPKRRKYRKEQ) the composition is skewed to basic residues. The disordered stretch occupies residues 1–20 (MLQPKRRKYRKEQKGRNTGI).

It belongs to the universal ribosomal protein uL16 family. Part of the 50S ribosomal subunit.

Binds 23S rRNA and is also seen to make contacts with the A and possibly P site tRNAs. This Burkholderia mallei (strain NCTC 10247) protein is Large ribosomal subunit protein uL16.